The sequence spans 510 residues: NAD(P)H-quinone oxidoreductase subunit 2, chloroplastic (510 aa).

Transmembrane regions (helical) follow at residues 24 to 44, 59 to 79, 99 to 119, 124 to 144, 149 to 169, 183 to 203, 229 to 249, 295 to 315, 323 to 343, 354 to 374, 395 to 415, and 418 to 438; these read LLLF…GLIL, WFYF…LFRW, IFQF…VEYI, MAIT…MFLC, LITI…LSGY, YLLM…WLYG, ISIA…PAPF, WHLL…LIAI, MLAY…IVGD, YMLF…LFGL, ALSS…AGFF, and LHLF…IGLL.

Belongs to the complex I subunit 2 family. In terms of assembly, NDH is composed of at least 16 different subunits, 5 of which are encoded in the nucleus.

It is found in the plastid. The protein localises to the chloroplast thylakoid membrane. It carries out the reaction a plastoquinone + NADH + (n+1) H(+)(in) = a plastoquinol + NAD(+) + n H(+)(out). The catalysed reaction is a plastoquinone + NADPH + (n+1) H(+)(in) = a plastoquinol + NADP(+) + n H(+)(out). NDH shuttles electrons from NAD(P)H:plastoquinone, via FMN and iron-sulfur (Fe-S) centers, to quinones in the photosynthetic chain and possibly in a chloroplast respiratory chain. The immediate electron acceptor for the enzyme in this species is believed to be plastoquinone. Couples the redox reaction to proton translocation, and thus conserves the redox energy in a proton gradient. This Ensete ventricosum (Abyssinian banana) protein is NAD(P)H-quinone oxidoreductase subunit 2, chloroplastic.